A 719-amino-acid polypeptide reads, in one-letter code: Putative RNA-binding protein involved in heterochromatin assembly (719 aa).

Residues 226 to 322 (KILYMNNLPP…NLANTKQPRV (97 aa)) form the RRM domain. Residue serine 345 is modified to Phosphoserine. The segment at 355–384 (RPGDWNCPSCGFSNFQRRTACFRCSFPAPS) adopts a RanBP2-type 1 zinc-finger fold. A disordered region spans residues 389–415 (HTANSNNNVNSSRNNLNNRVNSGSSSN). The segment covering 392–415 (NSNNNVNSSRNNLNNRVNSGSSSN) has biased composition (low complexity). Residue serine 455 is modified to Phosphoserine. Residues 511–561 (NNNINGNGNGNGNNSNNNNNHNNNHNNNHHNGSINSNSNTNNNNNNNNGNN) are disordered. The RanBP2-type 2 zinc-finger motif lies at 581–610 (RAGDWKCSTCTYHNFAKNVVCLRCGGPKSI). Positions 622–649 (DSSTFGPASRTPSNNNISVNTNGGSNAG) are enriched in polar residues. Positions 622-661 (DSSTFGPASRTPSNNNISVNTNGGSNAGRTDGNDNKGRDI) are disordered. Serine 630 bears the Phosphoserine mark. The span at 652–661 (DGNDNKGRDI) shows a compositional bias: basic and acidic residues.

The protein localises to the chromosome. It is found in the nucleus. Functionally, may play a role in chromatin organization. This Saccharomyces cerevisiae (strain ATCC 204508 / S288c) (Baker's yeast) protein is Putative RNA-binding protein involved in heterochromatin assembly.